Here is a 406-residue protein sequence, read N- to C-terminus: MKRAFILVLDSFGIGATADAQAFGDVGSDTLGHIADQCAQGLADNAERKGALQLPNLSKLGLAMAHKESTGRFAPGLDERADIIGAYAHAAELSSGKDTPSGHWEIAGVPVLFEWGYFSDKQNSFPKELTDRILARAGLDGFLGNCHASGTQVLDDLGEEHMRTGKPIFYTSADSVFQIACHEETFGLDRLLELCQIAREELADYNIGRVIARPFVGPGKGQFARTGNRRDLSVEPPSATVLQKLVEEKQGRVVSIGKIADIYAYCGITDKVKATGIPDLFEATLEQIKQAGDNTIVFTNFVDFDSAYGHRRDVAGYAAALEYFDKRLPEVLELMQEDDILILTADHGCDPTWPGTDHTREHIPVLVYGKKVAPGSLGRRDTFADIGQTLASYFGTSPMDYGKNFL.

Positions 10, 305, 310, 346, 347, and 358 each coordinate Mn(2+).

The protein belongs to the phosphopentomutase family. Mn(2+) serves as cofactor.

The protein localises to the cytoplasm. It catalyses the reaction 2-deoxy-alpha-D-ribose 1-phosphate = 2-deoxy-D-ribose 5-phosphate. The catalysed reaction is alpha-D-ribose 1-phosphate = D-ribose 5-phosphate. It participates in carbohydrate degradation; 2-deoxy-D-ribose 1-phosphate degradation; D-glyceraldehyde 3-phosphate and acetaldehyde from 2-deoxy-alpha-D-ribose 1-phosphate: step 1/2. Isomerase that catalyzes the conversion of deoxy-ribose 1-phosphate (dRib-1-P) and ribose 1-phosphate (Rib-1-P) to deoxy-ribose 5-phosphate (dRib-5-P) and ribose 5-phosphate (Rib-5-P), respectively. In Vibrio cholerae serotype O1 (strain ATCC 39315 / El Tor Inaba N16961), this protein is Phosphopentomutase.